We begin with the raw amino-acid sequence, 280 residues long: Probable endonuclease 4 (280 aa).

Positions 69, 109, 145, 179, 182, 216, 229, 231, and 261 each coordinate Zn(2+).

It belongs to the AP endonuclease 2 family. It depends on Zn(2+) as a cofactor.

It carries out the reaction Endonucleolytic cleavage to 5'-phosphooligonucleotide end-products.. Functionally, endonuclease IV plays a role in DNA repair. It cleaves phosphodiester bonds at apurinic or apyrimidinic (AP) sites, generating a 3'-hydroxyl group and a 5'-terminal sugar phosphate. This is Probable endonuclease 4 from Pelodictyon phaeoclathratiforme (strain DSM 5477 / BU-1).